Consider the following 546-residue polypeptide: Chaperonin GroEL 1 (546 aa).

Residues 30–33 (TLGP), K51, 87–91 (DGTTT), G415, 479–481 (NAA), and D495 contribute to the ATP site. The disordered stretch occupies residues 526–546 (KEDAPMPGGMPGGMGGMGMDM). Over residues 534-546 (GMPGGMGGMGMDM) the composition is skewed to gly residues.

It belongs to the chaperonin (HSP60) family. Forms a cylinder of 14 subunits composed of two heptameric rings stacked back-to-back. Interacts with the co-chaperonin GroES.

Its subcellular location is the cytoplasm. It catalyses the reaction ATP + H2O + a folded polypeptide = ADP + phosphate + an unfolded polypeptide.. Its function is as follows. Together with its co-chaperonin GroES, plays an essential role in assisting protein folding. The GroEL-GroES system forms a nano-cage that allows encapsulation of the non-native substrate proteins and provides a physical environment optimized to promote and accelerate protein folding. The polypeptide is Chaperonin GroEL 1 (Burkholderia ambifaria (strain ATCC BAA-244 / DSM 16087 / CCUG 44356 / LMG 19182 / AMMD) (Burkholderia cepacia (strain AMMD))).